The following is a 45-amino-acid chain: Mu-conotoxin-like Cal 12.1.1d (45 aa).

4 disulfide bridges follow: cysteine 3–cysteine 16, cysteine 11–cysteine 28, cysteine 18–cysteine 33, and cysteine 27–cysteine 39. Residue tryptophan 17 is modified to 6'-bromotryptophan. 4-carboxyglutamate is present on glutamate 21. Residue proline 23 is modified to 4-hydroxyproline. 2 positions are modified to 6'-bromotryptophan: tryptophan 37 and tryptophan 38. Residue proline 40 is modified to 4-hydroxyproline. Tryptophan 44 is modified (6'-bromotryptophan).

Expressed by the venom duct.

It is found in the secreted. In terms of biological role, mu-conotoxins block voltage-gated sodium channels. This toxin reversibly blocks voltage-gated sodium channel in cephalopods, with no alteration in the voltage dependence of sodium conductance or on the kinetics of inactivation. This chain is Mu-conotoxin-like Cal 12.1.1d, found in Californiconus californicus (California cone).